The sequence spans 127 residues: Large ribosomal subunit protein bL17 (127 aa).

The protein belongs to the bacterial ribosomal protein bL17 family. Part of the 50S ribosomal subunit. Contacts protein L32.

The chain is Large ribosomal subunit protein bL17 from Fervidobacterium nodosum (strain ATCC 35602 / DSM 5306 / Rt17-B1).